The primary structure comprises 415 residues: PRKCA-binding protein (415 aa).

A PDZ domain is found at 22–105; the sequence is KVTLQKDAQN…EVTIHYNKLQ (84 aa). Zn(2+)-binding residues include Cys44 and Cys46. Residue Thr82 is modified to Phosphothreonine. The AH domain maps to 144–357; the sequence is LCNDGLVKRL…CYAVLRDADV (214 aa). The segment at 376 to 415 is disordered; that stretch reads EEFTDGEEEEEEEDTAAGEPSRDTRGAAGPLDKGGSWCDS. Residues 377–391 show a composition bias toward acidic residues; it reads EFTDGEEEEEEEDTA. A lipid anchor (S-palmitoyl cysteine; by DHHC8) is attached at Cys413.

As to quaternary structure, monomer and homodimer. Interacts with CXADR. Interacts presynaptically with the glutamate receptors GRIA2, GRIA3, GRIK3, isoform 3 of GRIA4, isoform A of GRM4, GRM7 and GRM8; with NAPA and NAPB; and with BTG2. The interaction with NAPA and NAPB disrupts the interaction with GRIA2, conducting to the internalization of GRIA2. Interacts with PRKCA; with the amine transporters SLC6A2 and SLC6A3; with the channels ASIC1 and ASIC2; with the GTP-binding proteins ARF1 and ARF3; with the ephrin receptor tyrosine kinases EPHA7, EPHB1 and EPHB2; with ERBB2 and through its PDZ domain with the C-terminal tail of PRLHR. Interacts with UNC5A. Interacts (via AH domain) with NCS1/FREQ; in a calcium-dependent manner. Interacts with F-actin and associates with the ARP2/3 complex. Interacts (via PDZ domain) with ARF1 (activated); the interaction blocks Arp2/3 complex inhibition. Interacts with SORCS3. Phosphorylation at Thr-82 appears to inhibit the interaction with AMPA receptors. In terms of processing, palmitoylation on Cys-413 is essential for long-term synaptic depression (LTD). Ubiquitous.

It localises to the cytoplasm. The protein localises to the perinuclear region. The protein resides in the membrane. Its subcellular location is the postsynaptic density. It is found in the synapse. It localises to the synaptosome. The protein localises to the cytoskeleton. In terms of biological role, probable adapter protein that bind to and organize the subcellular localization of a variety of membrane proteins containing some PDZ recognition sequence. Involved in the clustering of various receptors, possibly by acting at the receptor internalization level. Plays a role in synaptic plasticity by regulating the trafficking and internalization of AMPA receptors. May be regulated upon PRKCA activation. May regulate ASIC1/ASIC3 channel. Regulates actin polymerization by inhibiting the actin-nucleating activity of the Arp2/3 complex; the function is competitive with nucleation promoting factors and is linked to neuronal morphology regulation and AMPA receptor (AMPAR) endocytosis. Via interaction with the Arp2/3 complex involved in regulation of synaptic plasicity of excitatory synapses and required for spine shrinkage during long-term depression (LTD). Involved in regulation of astrocyte morphology, antagonistic to Arp2/3 complex activator WASL/N-WASP function. The chain is PRKCA-binding protein (PICK1) from Homo sapiens (Human).